A 185-amino-acid polypeptide reads, in one-letter code: Elongation factor P (185 aa).

The protein belongs to the elongation factor P family.

The protein resides in the cytoplasm. It functions in the pathway protein biosynthesis; polypeptide chain elongation. In terms of biological role, involved in peptide bond synthesis. Stimulates efficient translation and peptide-bond synthesis on native or reconstituted 70S ribosomes in vitro. Probably functions indirectly by altering the affinity of the ribosome for aminoacyl-tRNA, thus increasing their reactivity as acceptors for peptidyl transferase. The chain is Elongation factor P from Pelotomaculum thermopropionicum (strain DSM 13744 / JCM 10971 / SI).